We begin with the raw amino-acid sequence, 332 residues long: Homeobox protein SIX3 (332 aa).

The tract at residues 72–119 is interaction with TLE5; that stretch reads APPEELSMFQLPTLNFSPEQVASVCETLEETGDIERLGRFLWSLPVAP. The segment at residues 206-265 is a DNA-binding region (homeobox); it reads GEQKTHCFKERTRSLLREWYLQDPYPNPSKKRELAQATGLTPTQVGNWFKNRRQRDRAAA. A bind to RHO promoter region spans residues 232–234; sequence NPS. Disordered regions lie at residues 232 to 251 and 258 to 332; these read NPSKKRELAQATGLTPTQVG and RQRD…ECDV. The segment covering 293 to 309 has biased composition (low complexity); sequence SAESPSTAASPTTSVSS. A compositionally biased stretch (polar residues) spans 316–332; that stretch reads TGTSILSVTSSDSECDV.

The protein belongs to the SIX/Sine oculis homeobox family. As to quaternary structure, interacts with EYA4; translocates EYA4 from the cytoplasm to the nucleus and promotes activation of their target genes. Interacts with MTA1 and HDAC2; represses its own transcription. Interacts with MTA1; facilitates the binding of SIX3 to the core DNA motif of SIX3 promoter. Interacts with EYA1; promotes EYA1 translocation to the nucleus. Interacts with TLE1 and TLE5 (via Q domain); can act in combination with either TLE1 and/or TLE5 leading to transcriptional repression or activation, respectively. Interacts (via homeobox) with NR4A3; differentially regulates the transcriptional activities NR4A3. Interacts with GMNN. Interacts with TLE4.

It localises to the nucleus. In terms of biological role, transcriptional regulator which can act as both a transcriptional repressor and activator by binding a ATTA homeodomain core recognition sequence on these target genes. During forebrain development represses WNT1 expression allowing zona limitans intrathalamica formation and thereby ensuring proper anterio-posterior patterning of the diencephalon and formation of the rostral diencephalon. Acts as a direct upstream activator of SHH expression in the rostral diencephalon ventral midline and that in turn SHH maintains its expression. In addition, Six3 activity is required for the formation of the telencephalon. During postnatal stages of brain development is necessary for ependymal cell maturation by promoting the maturation of radial glia into ependymal cells through regulation of neuroblast proliferation and migration. Acts on the proliferation and differentiation of neural progenitor cells through activating transcription of CCND1 and CCND2. During early lens formation plays a role in lens induction and specification by activating directly PAX6 in the presumptive lens ectoderm. In turn PAX6 activates SIX3 resulting in activation of PDGFRA and CCND1 promoting cell proliferation. Also is required for the neuroretina development by directly suppressing WNT8B expression in the anterior neural plate territory. Its action during retina development and lens morphogenesis is TLE5 and TLE4-dependent manner. Furthermore, during eye development regulates several genes expression. Before and during early lens development represses the CRYGF promoter by binding a SIX repressor element. Directly activates RHO transcription, or cooperates with CRX or NRL. Six3 also functions in the formation of the proximodistal axis of the optic cup, and promotes the formation of optic vesicles-like structures. During pituitary development, acts in parallel or alternatively with HESX1 to control cell proliferation through Wnt/beta-catenin pathway. Plays a role in eye development by suppressing WNT1 expression and in dorsal-ventral patterning by repressing BMP signaling pathway. The chain is Homeobox protein SIX3 (SIX3) from Homo sapiens (Human).